A 1134-amino-acid polypeptide reads, in one-letter code: Translation initiation factor IF-2 (1134 aa).

Disordered regions lie at residues 55–465 (AQKS…HIIG) and 491–524 (LARP…QRQR). Polar residues-rich tracts occupy residues 56 to 65 (QKSSNSSSPP), 83 to 105 (SPPT…SSLK), 137 to 147 (PSISKNNSLKV), 208 to 234 (QIKQ…IQTN), and 251 to 264 (VQSQ…NNNL). Basic and acidic residues-rich tracts occupy residues 391-403 (KRGD…KKDG) and 438-450 (PDWD…EALR). Basic residues-rich tracts occupy residues 495 to 504 (GKPKASKKSG) and 511 to 524 (LRKR…QRQR). In terms of domain architecture, tr-type G spans 626 to 798 (RRPPVVTVMG…ILLVTEVEDL (173 aa)). The tract at residues 635 to 642 (GHVDHGKT) is G1. 635-642 (GHVDHGKT) is a binding site for GTP. Positions 660–664 (GITQH) are G2. The interval 685–688 (DTPG) is G3. GTP is bound by residues 685 to 689 (DTPGH) and 739 to 742 (NKID). A G4 region spans residues 739 to 742 (NKID). Positions 775-777 (SAI) are G5.

Belongs to the TRAFAC class translation factor GTPase superfamily. Classic translation factor GTPase family. IF-2 subfamily.

Its subcellular location is the cytoplasm. Functionally, one of the essential components for the initiation of protein synthesis. Protects formylmethionyl-tRNA from spontaneous hydrolysis and promotes its binding to the 30S ribosomal subunits. Also involved in the hydrolysis of GTP during the formation of the 70S ribosomal complex. In Prochlorococcus marinus (strain SARG / CCMP1375 / SS120), this protein is Translation initiation factor IF-2.